The following is a 180-amino-acid chain: Nucleoside triphosphate/diphosphate phosphatase (180 aa).

Residue arginine 26 is the Proton donor of the active site. Residues asparagine 90, aspartate 106, aspartate 108, aspartate 110, aspartate 123, and glutamate 126 each contribute to the Mg(2+) site.

It belongs to the Ntdp family. It depends on Mg(2+) as a cofactor.

It carries out the reaction a ribonucleoside 5'-triphosphate + H2O = a ribonucleoside 5'-diphosphate + phosphate + H(+). The enzyme catalyses a ribonucleoside 5'-diphosphate + H2O = a ribonucleoside 5'-phosphate + phosphate + H(+). Its function is as follows. Has nucleoside phosphatase activity towards nucleoside triphosphates and nucleoside diphosphates. This Staphylococcus saprophyticus subsp. saprophyticus (strain ATCC 15305 / DSM 20229 / NCIMB 8711 / NCTC 7292 / S-41) protein is Nucleoside triphosphate/diphosphate phosphatase.